The following is a 347-amino-acid chain: 4-hydroxy-2-oxovalerate aldolase (347 aa).

Residues P11 to L262 enclose the Pyruvate carboxyltransferase domain. R19–D20 is a substrate binding site. D20 is a binding site for Mn(2+). Catalysis depends on H23, which acts as the Proton acceptor. Substrate is bound by residues S173 and H201. Residues H201 and H203 each contribute to the Mn(2+) site. Y292 is a binding site for substrate.

It belongs to the 4-hydroxy-2-oxovalerate aldolase family. Homodimer. Can also form a heterotetramer composed of two aldolase (TTHB246) and two dehydrogenase (TTHB247) subunits. Upon complex formation, the aldolase shows a 5-fold increase in substrate affinity, while the dehydrogenase shows a 3-fold decrease; the kcat values of each enzyme are reduced by 2-fold when they are in a complex. Requires Co(2+) as cofactor. Ni(2+) is required as a cofactor. Mn(2+) serves as cofactor.

It carries out the reaction (S)-4-hydroxy-2-oxopentanoate = acetaldehyde + pyruvate. It catalyses the reaction (S)-4-hydroxy-2-oxohexanoate = propanal + pyruvate. Appears to be allosterically activated by NADH. Functionally, catalyzes the retro-aldol cleavage of both 4-hydroxy-2-oxopentanoate (HOPA) and 4-hydroxy-2-oxohexanoate (HOHA) to pyruvate and acetaldehyde or propanaldehyde, respectively. The aldehydes produced by this reaction are directly channeled to the dehydrogenase TTHB247, ensuring that these toxic aldehydes are sequestered from cellular components. Is involved in the meta-cleavage pathway for the degradation of aromatic compounds. Appears to be stereospecific since it can cleave (4S)-4-hydroxy-2-oxopentanoate but not the (4R) isomer. Is not able to catalyze the aldol addition of 2-oxobutyrate with acetaldehyde; this indicates that the enzyme is specific for pyruvate as the carbonyl donor. This chain is 4-hydroxy-2-oxovalerate aldolase, found in Thermus thermophilus (strain ATCC 27634 / DSM 579 / HB8).